The primary structure comprises 337 residues: Phytanoyl-CoA dioxygenase, peroxisomal (337 aa).

Residues 1 to 30 (MDRNRASARLTVLLRHLGCRSAGTIIAHHT) constitute a peroxisome transit peptide. K59 and K108 each carry N6-succinyllysine. 2-oxoglutarate-binding positions include K120, M157, 175–177 (HQD), and W193. Fe cation-binding residues include H175 and D177. K252 is subject to N6-succinyllysine. H264 is a Fe cation binding site. Residues S266 and R275 each coordinate 2-oxoglutarate.

This sequence belongs to the PhyH family. Interacts with FKBP52 and PHYHIP. Fe cation is required as a cofactor. The cofactor is L-ascorbate. Requires ATP as cofactor. Mg(2+) serves as cofactor.

Its subcellular location is the peroxisome. It catalyses the reaction phytanoyl-CoA + 2-oxoglutarate + O2 = 2-hydroxyphytanoyl-CoA + succinate + CO2. The enzyme catalyses 3-methylhexadecanoyl-CoA + 2-oxoglutarate + O2 = 2-hydroxy-3-methylhexadecanoyl-CoA + succinate + CO2. The catalysed reaction is hexadecanoyl-CoA + 2-oxoglutarate + O2 = 2-hydroxyhexadecanoyl-CoA + succinate + CO2. It carries out the reaction octanoyl-CoA + 2-oxoglutarate + O2 = 2-hydroxyoctanoyl-CoA + succinate + CO2. It catalyses the reaction decanoyl-CoA + 2-oxoglutarate + O2 = 2-hydroxydecanoyl-CoA + succinate + CO2. The enzyme catalyses 3-methylbutanoyl-CoA + 2-oxoglutarate + O2 = 2-hydroxy-3-methylbutanoyl-CoA + succinate + CO2. The catalysed reaction is heptadecanoyl-CoA + 2-oxoglutarate + O2 = 2-hydroxyheptadecanoyl-CoA + succinate + CO2. It carries out the reaction eicosanoyl-CoA + 2-oxoglutarate + O2 = 2-hydroxyeicosanoyl-CoA + succinate + CO2. It catalyses the reaction octadecanoyl-CoA + 2-oxoglutarate + O2 = 2-hydroxyoctadecanoyl-CoA + succinate + CO2. The enzyme catalyses dodecanoyl-CoA + 2-oxoglutarate + O2 = 2-hydroxydodecanoyl-CoA + succinate + CO2. The catalysed reaction is tetradecanoyl-CoA + 2-oxoglutarate + O2 = 2-hydroxytetradecanoyl-CoA + succinate + CO2. It carries out the reaction hexanoyl-CoA + 2-oxoglutarate + O2 = 2-hydroxyhexanoyl-CoA + succinate + CO2. It catalyses the reaction butanoyl-CoA + 2-oxoglutarate + O2 = 2-hydroxybutanoyl-CoA + succinate + CO2. The enzyme catalyses 3-methylnonanoyl-CoA + 2-oxoglutarate + O2 = 2-hydroxy-3-methylnonanoyl-CoA + succinate + CO2. The catalysed reaction is 3-methylundecanoyl-CoA + 2-oxoglutarate + O2 = 2-hydroxy-3-methylundecanoyl-CoA + succinate + CO2. It carries out the reaction 3-methyldodecanoyl-CoA + 2-oxoglutarate + O2 = 2-hydroxy-3-methyldodecanoyl-CoA + succinate + CO2. It functions in the pathway lipid metabolism; fatty acid metabolism. Its function is as follows. Catalyzes the 2-hydroxylation of not only racemic phytanoyl-CoA and the isomers of 3-methylhexadecanoyl-CoA, but also a variety of other mono- branched 3-methylacyl-CoA esters (with a chain length of at least seven carbon atoms) and straight-chain acyl-CoA esters (with a chain length longer than four carbon atoms). Does not hydroxylate long and very long straight chain acyl-CoAs or 2-methyl-and 4-methyl-branched acyl-CoAs. This chain is Phytanoyl-CoA dioxygenase, peroxisomal (PHYH), found in Bos taurus (Bovine).